Here is a 514-residue protein sequence, read N- to C-terminus: Sugar transport protein 10 (514 aa).

The Cytoplasmic portion of the chain corresponds to Met-1 to Glu-18. 10 helical membrane-spanning segments follow: residues Gly-19–Phe-39, Leu-86–Thr-106, Val-113–Val-133, Val-135–Ser-155, Gly-170–Ile-190, Val-204–Pro-224, Leu-285–Phe-305, Ala-320–Ile-340, Leu-350–Ile-370, and Trp-389–Gly-409. Cys-77 and Cys-449 form a disulfide bridge. A beta-D-glucose-binding site is contributed by Gln-177. 4 residues coordinate beta-D-glucose: Gln-295, Gln-296, Asn-301, and Asn-332. Residue Trp-410 participates in beta-D-glucose binding. The next 2 membrane-spanning stretches (helical) occupy residues Ile-428–Leu-448 and Phe-453–Leu-473. At Leu-474–Asn-514 the chain is on the cytoplasmic side.

This sequence belongs to the major facilitator superfamily. Sugar transporter (TC 2.A.1.1) family. Expressed in primordia of lateral roots, pollinated stigmata, and pollen tubes.

It is found in the membrane. The enzyme catalyses D-glucose(out) + H(+)(out) = D-glucose(in) + H(+)(in). The catalysed reaction is D-mannose(out) + H(+)(out) = D-mannose(in) + H(+)(in). It catalyses the reaction D-galactose(in) + H(+)(in) = D-galactose(out) + H(+)(out). Its function is as follows. Hexose-H(+) symporter that catalyzes the high-affinity uptake of glucose, galactose and mannose. Proton-coupled symporter responsible for the uptake of glucose from the apoplast into the cells. The chain is Sugar transport protein 10 from Arabidopsis thaliana (Mouse-ear cress).